We begin with the raw amino-acid sequence, 30 residues long: U1-poneritoxin-Ni3b (30 aa).

The protein belongs to the ponericin-G family. In terms of tissue distribution, expressed by the venom gland.

It is found in the secreted. Shows a broad spectrum of activity against both Gram-positive and Gram-negative bacteria. Also has antimicrobial activity against S.cerevisiae. Has insecticidal and non-hemolytic activity. The sequence is that of U1-poneritoxin-Ni3b from Neoponera inversa (Ant).